The chain runs to 487 residues: Protein nucleotidyltransferase YdiU (487 aa).

ATP is bound by residues glycine 90, glycine 92, arginine 93, lysine 113, aspartate 125, glycine 126, arginine 176, and arginine 183. The active-site Proton acceptor is the aspartate 252. Positions 253 and 262 each coordinate Mg(2+). Aspartate 262 contacts ATP.

This sequence belongs to the SELO family. Mg(2+) serves as cofactor. It depends on Mn(2+) as a cofactor.

The enzyme catalyses L-seryl-[protein] + ATP = 3-O-(5'-adenylyl)-L-seryl-[protein] + diphosphate. It carries out the reaction L-threonyl-[protein] + ATP = 3-O-(5'-adenylyl)-L-threonyl-[protein] + diphosphate. It catalyses the reaction L-tyrosyl-[protein] + ATP = O-(5'-adenylyl)-L-tyrosyl-[protein] + diphosphate. The catalysed reaction is L-histidyl-[protein] + UTP = N(tele)-(5'-uridylyl)-L-histidyl-[protein] + diphosphate. The enzyme catalyses L-seryl-[protein] + UTP = O-(5'-uridylyl)-L-seryl-[protein] + diphosphate. It carries out the reaction L-tyrosyl-[protein] + UTP = O-(5'-uridylyl)-L-tyrosyl-[protein] + diphosphate. Its function is as follows. Nucleotidyltransferase involved in the post-translational modification of proteins. It can catalyze the addition of adenosine monophosphate (AMP) or uridine monophosphate (UMP) to a protein, resulting in modifications known as AMPylation and UMPylation. This Pseudomonas savastanoi pv. phaseolicola (strain 1448A / Race 6) (Pseudomonas syringae pv. phaseolicola (strain 1448A / Race 6)) protein is Protein nucleotidyltransferase YdiU.